The chain runs to 687 residues: Polyphosphate kinase (687 aa).

Residue Asn-45 coordinates ATP. The Mg(2+) site is built by Arg-375 and Arg-405. His-435 (phosphohistidine intermediate) is an active-site residue. Residues Tyr-472, Arg-568, and His-596 each coordinate ATP.

The protein belongs to the polyphosphate kinase 1 (PPK1) family. Mg(2+) is required as a cofactor. Post-translationally, an intermediate of this reaction is the autophosphorylated ppk in which a phosphate is covalently linked to a histidine residue through a N-P bond.

It catalyses the reaction [phosphate](n) + ATP = [phosphate](n+1) + ADP. Its function is as follows. Catalyzes the reversible transfer of the terminal phosphate of ATP to form a long-chain polyphosphate (polyP). The chain is Polyphosphate kinase from Paraburkholderia phytofirmans (strain DSM 17436 / LMG 22146 / PsJN) (Burkholderia phytofirmans).